Here is a 311-residue protein sequence, read N- to C-terminus: tRNA-cytidine(32) 2-sulfurtransferase (311 aa).

The PP-loop motif motif lies at serine 47–serine 52. Residues cysteine 122, cysteine 125, and cysteine 213 each contribute to the [4Fe-4S] cluster site.

The protein belongs to the TtcA family. Homodimer. The cofactor is Mg(2+). Requires [4Fe-4S] cluster as cofactor.

The protein resides in the cytoplasm. It carries out the reaction cytidine(32) in tRNA + S-sulfanyl-L-cysteinyl-[cysteine desulfurase] + AH2 + ATP = 2-thiocytidine(32) in tRNA + L-cysteinyl-[cysteine desulfurase] + A + AMP + diphosphate + H(+). The protein operates within tRNA modification. Catalyzes the ATP-dependent 2-thiolation of cytidine in position 32 of tRNA, to form 2-thiocytidine (s(2)C32). The sulfur atoms are provided by the cysteine/cysteine desulfurase (IscS) system. The polypeptide is tRNA-cytidine(32) 2-sulfurtransferase (Enterobacter sp. (strain 638)).